The chain runs to 876 residues: Eukaryotic translation initiation factor 3 subunit C (876 aa).

Disordered stretches follow at residues 1 to 25 (MSRF…VVRA) and 154 to 233 (SXFR…IREQ). The span at 11 to 20 (SESESSSEDE) shows a compositional bias: acidic residues. Composition is skewed to basic and acidic residues over residues 154–172 (SXFR…KDSS) and 182–192 (KPIKEKPKPEP). Residues 206–219 (SMDWASSSSDSSFS) are compositionally biased toward low complexity. In terms of domain architecture, PCI spans 632–808 (FHMHINLELL…ECAILHRSEP (177 aa)). The disordered stretch occupies residues 839–876 (FFQRGGAQRGEGRQRERPREGWNRRTRNRRRDDERADD). A compositionally biased stretch (basic and acidic residues) spans 848 to 861 (GEGRQRERPREGWN).

It belongs to the eIF-3 subunit C family. In terms of assembly, component of the eukaryotic translation initiation factor 3 (eIF-3) complex.

It is found in the cytoplasm. Component of the eukaryotic translation initiation factor 3 (eIF-3) complex, which is involved in protein synthesis of a specialized repertoire of mRNAs and, together with other initiation factors, stimulates binding of mRNA and methionyl-tRNAi to the 40S ribosome. The eIF-3 complex specifically targets and initiates translation of a subset of mRNAs involved in cell proliferation. This is Eukaryotic translation initiation factor 3 subunit C from Bombyx mori (Silk moth).